The following is a 207-amino-acid chain: Homeobox protein BarH-like 1 (207 aa).

A DNA-binding region (homeobox) is located at residues 95–154 (GRRSRTVFTELQLMGLEKRFEKQKYLSTPDRIDLAESLGLSQLQVKTWYQNRRMKWKKIV). Positions 157–207 (GGGLESPTKPKGRPKKNSIPSSEQLSEQERAKETEKPPESPGEPSERQQEE) are disordered. Over residues 183 to 207 (EQERAKETEKPPESPGEPSERQQEE) the composition is skewed to basic and acidic residues.

It belongs to the BAR homeobox family. Expressed predominantly in the facial primordia, developing stomach, and proximal limbs.

Its subcellular location is the nucleus. Its function is as follows. Transcription factor, which is involved in craniofacial development, in odontogenic region definition, and in stomach organogenesis. Binds to a regulatory module of the NCAM promoter. The sequence is that of Homeobox protein BarH-like 1 (BARX1) from Gallus gallus (Chicken).